A 1459-amino-acid polypeptide reads, in one-letter code: DNA-binding protein RFX7 (1459 aa).

Residues 1–27 (MAEEQQQPPPQQLDAPQQLPLSAPNPG) form a disordered region. The span at 12–21 (QLDAPQQLPL) shows a compositional bias: low complexity. A DNA-binding region (RFX-type winged-helix) is located at residues 108 to 183 (AFSWIRNTLE…YCYSGLRKKA (76 aa)). The short motif at 188–193 (PTLPNL) is the PxLPxI/L motif; mediates interaction with ANKRA2 and RFXANK element. Disordered stretches follow at residues 303–347 (AKQQ…LPNG), 404–428 (SVKQ…ARHR), 482–590 (PSNS…GVTE), 634–659 (FTST…SPRK), 688–716 (GQKP…AQIP), and 918–1016 (SVTP…VPPS). Composition is skewed to polar residues over residues 404–416 (SVKQ…QNVP) and 482–502 (PSNS…TGTT). Positions 521–534 (SPGSRASSTGGTSA) are enriched in low complexity. Positions 537-549 (VKMEPEGSSDEHP) are enriched in basic and acidic residues. 3 stretches are compositionally biased toward polar residues: residues 562-578 (PLTT…NTDG), 634-645 (FTSTSSPSNGDS), and 706-716 (TESSTAGAQIP). Positions 947 to 963 (TPTPTPTPTPTPTPTPT) are enriched in pro residues. The segment covering 971 to 1009 (GSQSLSRESPCSRLAQTTPVDSALGSSRHTPIGTPHSNC) has biased composition (polar residues).

This sequence belongs to the RFX family. In terms of assembly, interacts (via PxLPxI/L motif) with RFXANK (via ankyrin repeats). Interacts (via PxLPxI/L motif) with ANKRA2 (via ankyrin repeats). As to expression, expressed in spleen and lymph node and to a lower extend in brain (at protein level). Expressed in lymphoid organs and lymphoid cell subsets. Expressed throughout natural killer (NK) cell maturation.

The protein localises to the nucleus. Functionally, transcription factor. Acts as a transcriptional activator by binding to promoter regions of target genes, such as Rec8, Mxd4 and Ddit4. Plays a role in natural killer (NK) cell maintenance and immunity. May play a role in the process of ciliogenesis in the neural tube and neural tube closure. This chain is DNA-binding protein RFX7, found in Mus musculus (Mouse).